A 338-amino-acid polypeptide reads, in one-letter code: Protein REG2 (338 aa).

Residues 1–21 (MTLSNCDSLDNLFQDPPEEEE) are disordered.

Regulatory subunit, binds to type-1 protein phosphatase. Functions with HEX2/REG1 and SNF1 protein kinase to regulate growth. Might regulate SNF1 directly or indirectly. The sequence is that of Protein REG2 (REG2) from Saccharomyces cerevisiae (strain ATCC 204508 / S288c) (Baker's yeast).